We begin with the raw amino-acid sequence, 692 residues long: Glycine--tRNA ligase beta subunit (692 aa).

The protein belongs to the class-II aminoacyl-tRNA synthetase family. In terms of assembly, tetramer of two alpha and two beta subunits.

Its subcellular location is the cytoplasm. The catalysed reaction is tRNA(Gly) + glycine + ATP = glycyl-tRNA(Gly) + AMP + diphosphate. The protein is Glycine--tRNA ligase beta subunit of Oceanobacillus iheyensis (strain DSM 14371 / CIP 107618 / JCM 11309 / KCTC 3954 / HTE831).